The sequence spans 145 residues: Probable WRKY transcription factor 75 (145 aa).

Basic and acidic residues predominate over residues 20 to 38; sequence SKPELHQGEEESSKVRSEG. Residues 20–55 are disordered; that stretch reads SKPELHQGEEESSKVRSEGCSKSVESSKKKGKKQRY. The WRKY DNA-binding region spans 61–126; sequence SQVDILDDGY…YEGVHSHPIE (66 aa).

Belongs to the WRKY group II-c family.

The protein resides in the nucleus. In terms of biological role, transcription factor. Interacts specifically with the W box (5'-(T)TGAC[CT]-3'), a frequently occurring elicitor-responsive cis-acting element. The protein is Probable WRKY transcription factor 75 (WRKY75) of Arabidopsis thaliana (Mouse-ear cress).